A 150-amino-acid chain; its full sequence is MLAQFDVNLVVLLVLLICGLLSQNAAVTIAAGVLIVIKITPLNQFFPYIQAHGLNLGILILTIGVLTPIASGKLSGESILKSFISFKSLVAIAIGLLVAWLGGRGVKLMSSQPDVVAGLLIGTVAGVALLRGVPVGPLIAAGLLSLFIGK.

4 helical membrane passes run 1–21 (MLAQFDVNLVVLLVLLICGLL), 45–65 (FFPYIQAHGLNLGILILTIGV), 83–103 (FISFKSLVAIAIGLLVAWLGG), and 115–135 (VVAGLLIGTVAGVALLRGVPV).

This sequence belongs to the UPF0756 family.

It is found in the cell membrane. This chain is UPF0756 membrane protein ABSDF1616, found in Acinetobacter baumannii (strain SDF).